Reading from the N-terminus, the 461-residue chain is Coronin-1A (461 aa).

Serine 2 is modified (N-acetylserine). Residue serine 2 is modified to Phosphoserine; by PKC. WD repeat units follow at residues histidine 13–proline 63, asparagine 73–glutamate 110, proline 123–aspartate 160, glycine 164–glutamate 204, lysine 207–aspartate 251, proline 258–glutamate 296, and proline 302–alanine 349. Positions leucine 404–threonine 418 are enriched in basic and acidic residues. A disordered region spans residues leucine 404–alanine 429. A Phosphothreonine; by PKC modification is found at threonine 412. Threonine 418 is subject to Phosphothreonine. Residue serine 422 is modified to Phosphoserine. Residues alanine 424 to alanine 460 adopt a coiled-coil conformation. An N6-acetyllysine modification is found at lysine 449.

The protein belongs to the WD repeat coronin family. Binds actin. Post-translationally, phosphorylation at Thr-412 by PKC strongly down-regulates the association with actin. Polyubiquitinated by RNF128 with 'Lys-48'-linked chains, leading to proteasomal degradation. Expressed in brain, thymus, spleen, bone marrow and lymph node. Low in lung and gut.

It localises to the cytoplasm. Its subcellular location is the cytoskeleton. It is found in the cell cortex. The protein resides in the cytoplasmic vesicle. The protein localises to the phagosome membrane. Its function is as follows. May be a crucial component of the cytoskeleton of highly motile cells, functioning both in the invagination of large pieces of plasma membrane, as well as in forming protrusions of the plasma membrane involved in cell locomotion. In mycobacteria-infected macrophages, its retention on the phagosomal membrane prevents fusion between phagosomes and lysosomes. The sequence is that of Coronin-1A (CORO1A) from Bos taurus (Bovine).